A 220-amino-acid polypeptide reads, in one-letter code: Phosphatidylserine decarboxylase proenzyme (220 aa).

The active-site Schiff-base intermediate with substrate; via pyruvic acid is S188. S188 carries the pyruvic acid (Ser); by autocatalysis modification.

Belongs to the phosphatidylserine decarboxylase family. PSD-A subfamily. Heterodimer of a large membrane-associated beta subunit and a small pyruvoyl-containing alpha subunit. Pyruvate serves as cofactor. Is synthesized initially as an inactive proenzyme. Formation of the active enzyme involves a self-maturation process in which the active site pyruvoyl group is generated from an internal serine residue via an autocatalytic post-translational modification. Two non-identical subunits are generated from the proenzyme in this reaction, and the pyruvate is formed at the N-terminus of the alpha chain, which is derived from the carboxyl end of the proenzyme. The post-translation cleavage follows an unusual pathway, termed non-hydrolytic serinolysis, in which the side chain hydroxyl group of the serine supplies its oxygen atom to form the C-terminus of the beta chain, while the remainder of the serine residue undergoes an oxidative deamination to produce ammonia and the pyruvoyl prosthetic group on the alpha chain.

The protein resides in the cell membrane. The enzyme catalyses a 1,2-diacyl-sn-glycero-3-phospho-L-serine + H(+) = a 1,2-diacyl-sn-glycero-3-phosphoethanolamine + CO2. Its pathway is phospholipid metabolism; phosphatidylethanolamine biosynthesis; phosphatidylethanolamine from CDP-diacylglycerol: step 2/2. In terms of biological role, catalyzes the formation of phosphatidylethanolamine (PtdEtn) from phosphatidylserine (PtdSer). The polypeptide is Phosphatidylserine decarboxylase proenzyme (Cytophaga hutchinsonii (strain ATCC 33406 / DSM 1761 / CIP 103989 / NBRC 15051 / NCIMB 9469 / D465)).